Consider the following 227-residue polypeptide: Glutathione S-transferase U27 (227 aa).

One can recognise a GST N-terminal domain in the interval 4 to 84; it reads EEVVVLNFWP…YIDEVWKDDK (81 aa). Glutathione contacts are provided by residues 14–15, 41–42, 55–56, and 68–69; these read SM, QK, KI, and ES. The region spanning 92–217 is the GST C-terminal domain; it reads DPYQKSQCRF…LKIFDRVTQI (126 aa).

It belongs to the GST superfamily. Tau family.

The protein localises to the cytoplasm. It is found in the cytosol. It catalyses the reaction RX + glutathione = an S-substituted glutathione + a halide anion + H(+). In terms of biological role, may be involved in the conjugation of reduced glutathione to a wide number of exogenous and endogenous hydrophobic electrophiles and have a detoxification role against certain herbicides. The chain is Glutathione S-transferase U27 (GSTU27) from Arabidopsis thaliana (Mouse-ear cress).